The primary structure comprises 234 residues: MTLSEQNIDKEELAKFSDLAQDWWNPAGKMKPLHLINPVRLKYIEQQITLKGKHVLDVGCGGGLLSEALAKHGAIVTGVDMSESLIDVAKNHAEQQQLNINYQCQDIEILTKDAQRFDIITCMELLEHVPDPQRMIKNCAALIKPGGKLFFSTINRNFKAYLYTIVGAEYVFNLLPKGTHDYAQFIRPSELTQWAESGGLRLLDITGIHYHPLKNEFDLSRDVSVNYLACFTHE.

Positions 40, 59, 80, and 123 each coordinate S-adenosyl-L-methionine.

This sequence belongs to the methyltransferase superfamily. UbiG/COQ3 family.

The catalysed reaction is a 3-demethylubiquinol + S-adenosyl-L-methionine = a ubiquinol + S-adenosyl-L-homocysteine + H(+). The enzyme catalyses a 3-(all-trans-polyprenyl)benzene-1,2-diol + S-adenosyl-L-methionine = a 2-methoxy-6-(all-trans-polyprenyl)phenol + S-adenosyl-L-homocysteine + H(+). It participates in cofactor biosynthesis; ubiquinone biosynthesis. Its function is as follows. O-methyltransferase that catalyzes the 2 O-methylation steps in the ubiquinone biosynthetic pathway. In Coxiella burnetii (strain CbuG_Q212) (Coxiella burnetii (strain Q212)), this protein is Ubiquinone biosynthesis O-methyltransferase.